A 1047-amino-acid chain; its full sequence is MAPRLQLEKAAWRWAEAVRPEDITHEHIELAYRIAVSACKRGACRRNCKGNPNCLVGIGEQSWLGEIDENTFHNIDDPNSERRDKNTFVGLTNLGATCYVNTFLQVWFHNLELRRALYRFQNSRAEGHNTDSDYEPRTICEHLQYLFALLQNSNRRYIDPSGLVKALGLDTGQQQDAQEFSKLFLSLLEDTLSKQKDPNLQNVIQQQFCGQFSYVTVCNKCGRESPLPSRFYELELNIQGHKNLTECVTEFLKEEKLDGDNRYYCESCQSKQNATRRIKLQSLPRTLNFQLMRFVFDRQSGHKKKLNTFISFPEVLDMEPFLEGREEKCTYELSAVLIHRGVSAYSGHYIAHVRDAHTNDWYKFNDEEIEKMEGKKLQLGIEEDIAETAKSQTRKPKCSKGYHCSRNAYMLVYKQQTEEINQTESPVDVPAFLQKLVEQDNRKFEEWCSEMSDMRKQSVDKGKAKHEEVKELYELLPAEDGQSYEFVPLEWLKKWLDDSTAIKEIDNSQFLCTHGKLHPDKIGEAKRISLKAADLLFSRYGGGPRLDRSSLCRDCVTQRCRVIRLKNQLNEDYREVTNLAKSALKSEESGFWIGKASLRSWRQLALDQLEEDEEETKHNNSKINGEKSSPGTKADGVKGDSEDGDGEEMKNFNEDILCYHGGLSILENDRRLVSAEVWNKLRMYFPKAPEFTQDHDPCQQCMRLEREGKENEALNRMMANEQKSSLLNLFQEKNRPTLQKWPQDTDILYIVPLYFVEEWKKFIRRPAKGNPVSNVGNSILLCPHGGFMFTYDSMLQGDAQHIALLWPAEWEVISKMFLVDQVISICRIHDKTQDNGNVQYQTHPDLCRECREGFIFQQQRDMREYTQATVYVRKVIDKKRMIKESAPEFSVSGSDVEDEKEEPKLDGEKDPDFSQTEGGAKRQKLNDTVSLPTAVVTTTSKSGIRRSTRHRKLRGEKALIVSANQTLKDLKIQIMHAFSVAPFDQNLSIDGRCLKDDSATLGSLGVIPESIICLKADEPIADYAAMDDVYQVCMPEEGFKGTGLLGH.

One can recognise a USP domain in the interval 89–416 (VGLTNLGATC…NAYMLVYKQQ (328 aa)). Residue Cys-98 is the Nucleophile of the active site. Catalysis depends on His-348, which acts as the Proton acceptor. DUSP domains lie at 457–551 (QSVD…RSSL), 567–697 (NQLN…DHDP), and 717–830 (MMAN…RIHD). The segment at 609–647 (LEEDEEETKHNNSKINGEKSSPGTKADGVKGDSEDGDGE) is disordered. Residues 621 to 631 (SKINGEKSSPG) are compositionally biased toward polar residues. The span at 635–647 (DGVKGDSEDGDGE) shows a compositional bias: basic and acidic residues. Positions 887–928 (PEFSVSGSDVEDEKEEPKLDGEKDPDFSQTEGGAKRQKLNDT) are disordered. Residues 901 to 912 (EEPKLDGEKDPD) show a composition bias toward basic and acidic residues. Residues 961 to 1012 (VSANQTLKDLKIQIMHAFSVAPFDQNLSIDGRCLKDDSATLGSLGVIPESII) enclose the Ubiquitin-like domain.

This sequence belongs to the peptidase C19 family.

Its subcellular location is the cytoplasm. It is found in the nucleus. The enzyme catalyses Thiol-dependent hydrolysis of ester, thioester, amide, peptide and isopeptide bonds formed by the C-terminal Gly of ubiquitin (a 76-residue protein attached to proteins as an intracellular targeting signal).. Its function is as follows. Recognizes and hydrolyzes the peptide bond at the C-terminal Gly of ubiquitin. Involved in the processing of poly-ubiquitin precursors as well as that of ubiquitinated proteins. The sequence is that of Ubiquitin carboxyl-terminal hydrolase 48 (usp48) from Danio rerio (Zebrafish).